The primary structure comprises 31 residues: Mycofactocin precursor peptide (31 aa).

Belongs to the mycofactocin precursor peptide family. The post-translational modifications that lead to mycofactocin involve oxidative decarboxylation of the C-terminal tyrosine residue catalyzed by MftC, introduction of a tyramine-valine cross-link, removal of the modified C-terminal dipeptide by MftE. The released dipeptide then undergoes oxidative deamination by MftD, glycosylation by MftF and methylation by an unknown enzyme.

In terms of biological role, precursor peptide that leads to mycofactocin (MFT) after extensive post-translational modifications by enzymes encoded by adjacent genes. Mycofactocin acts as a redox cofactor of nicotinamide-dependent oxidoreductases encoded in the same locus. Is required for the in vivo ethanol assimilation in M.smegmatis. In Mycolicibacterium smegmatis (strain ATCC 700084 / mc(2)155) (Mycobacterium smegmatis), this protein is Mycofactocin precursor peptide.